Reading from the N-terminus, the 374-residue chain is Putative glutamate--cysteine ligase 2 (374 aa).

It belongs to the glutamate--cysteine ligase type 2 family. YbdK subfamily.

The catalysed reaction is L-cysteine + L-glutamate + ATP = gamma-L-glutamyl-L-cysteine + ADP + phosphate + H(+). Functionally, ATP-dependent carboxylate-amine ligase which exhibits weak glutamate--cysteine ligase activity. The chain is Putative glutamate--cysteine ligase 2 from Verminephrobacter eiseniae (strain EF01-2).